The following is a 352-amino-acid chain: Uroporphyrinogen decarboxylase (352 aa).

Residues 26–30 (RQAGR), Asp76, Tyr153, Ser208, and His323 each bind substrate.

The protein belongs to the uroporphyrinogen decarboxylase family. Homodimer.

The protein resides in the cytoplasm. The catalysed reaction is uroporphyrinogen III + 4 H(+) = coproporphyrinogen III + 4 CO2. Its pathway is porphyrin-containing compound metabolism; protoporphyrin-IX biosynthesis; coproporphyrinogen-III from 5-aminolevulinate: step 4/4. Its function is as follows. Catalyzes the decarboxylation of four acetate groups of uroporphyrinogen-III to yield coproporphyrinogen-III. This chain is Uroporphyrinogen decarboxylase, found in Synechococcus sp. (strain CC9902).